The following is a 626-amino-acid chain: Kinesin-like protein Klp59C (626 aa).

The segment at 1–183 is globular; sequence MDKLSIEQKI…VRSGTTNERI (183 aa). The tract at residues 68–155 is disordered; that stretch reads CSGGNAASAN…GKNEDPGNPN (88 aa). Positions 72-96 are enriched in polar residues; sequence NAASANQTASISPRSMKQRIATGSL. Low complexity predominate over residues 101–112; sequence ATAPPRQQTAPP. The span at 113-150 shows a compositional bias: basic and acidic residues; that stretch reads VREDEVVHQAERMRKERERRREAQARTRLDREQGKNED. The stretch at 115–150 forms a coiled coil; the sequence is EDEVVHQAERMRKERERRREAQARTRLDREQGKNED. Residues 187 to 521 form the Kinesin motor domain; that stretch reads QIMVCVRKRP…LRYADRVKEL (335 aa). 277–284 serves as a coordination point for ATP; sequence GQTGSGKT. The disordered stretch occupies residues 557–608; it reads ASSTSMPGGGNQAQQHTNTANDLNRSQKPTSKPTYPTSGQQLVQRKGSSQRE.

This sequence belongs to the TRAFAC class myosin-kinesin ATPase superfamily. Kinesin family. MCAK/KIF2 subfamily.

The protein resides in the chromosome. Its subcellular location is the centromere. It localises to the kinetochore. It is found in the cytoplasm. The protein localises to the cytoskeleton. The protein resides in the spindle pole. In terms of biological role, required during anaphase to drive sister chromatid separation to actively depolymerize kinetochore microtubules at their kinetochore-associated plus ends, thereby contributing to chromatid mobility through a 'Pac-man' mechanism. The chain is Kinesin-like protein Klp59C (Klp59C) from Drosophila melanogaster (Fruit fly).